The primary structure comprises 672 residues: Putative per-hexamer repeat protein 5 (672 aa).

Gly residues-rich tracts occupy residues Thr-141–Thr-161, Thr-171–Thr-191, Thr-215–Thr-233, Thr-243–Thr-263, Thr-273–Thr-295, Thr-303–Ser-355, and Thr-365–Ser-389. Disordered stretches follow at residues Thr-141–Thr-193 and Thr-213–Ala-672. Low complexity predominate over residues Gly-390–Gly-424. The segment covering Thr-425 to Ser-469 has biased composition (gly residues). Positions Gly-470–Gly-486 are enriched in low complexity. Residues Thr-487–Ser-537 show a composition bias toward gly residues. A compositionally biased stretch (low complexity) spans Gly-538–Gly-552. Over residues Thr-553–Thr-617 the composition is skewed to gly residues. The segment covering Gly-618–Gly-636 has biased composition (low complexity). Gly residues-rich tracts occupy residues Thr-637–Thr-653 and Arg-663–Ala-672.

This Mus musculus (Mouse) protein is Putative per-hexamer repeat protein 5 (Phxr5).